The sequence spans 189 residues: Small ribosomal subunit protein uS7 (189 aa).

It belongs to the universal ribosomal protein uS7 family. In terms of assembly, part of the 30S ribosomal subunit.

Functionally, one of the primary rRNA binding proteins, it binds directly to 16S rRNA where it nucleates assembly of the head domain of the 30S subunit. Is located at the subunit interface close to the decoding center. The protein is Small ribosomal subunit protein uS7 of Methanosarcina acetivorans (strain ATCC 35395 / DSM 2834 / JCM 12185 / C2A).